Consider the following 160-residue polypeptide: UPF0262 protein ELI_10965 (160 aa).

Belongs to the UPF0262 family.

This Erythrobacter litoralis (strain HTCC2594) protein is UPF0262 protein ELI_10965.